The sequence spans 513 residues: Cytochrome P450 monooxygenase ARMGADRAFT_1018418 (513 aa).

A helical transmembrane segment spans residues 1–21; it reads MTHASSAWFLAAVVIVTFIVV. Cys-435 contacts heme. Asn-442 is a glycosylation site (N-linked (GlcNAc...) asparagine).

Belongs to the cytochrome P450 family. Heme is required as a cofactor.

The protein localises to the membrane. Its pathway is secondary metabolite biosynthesis. In terms of biological role, cytochrome P450 monooxygenase, part of the gene cluster that mediates the biosynthesis of melleolides, a range of antifungal and phytotoxic polyketide derivatives composed of an orsellinic acid (OA) moiety esterified to various sesquiterpene alcohols. The first step in melleolides biosynthesis is performed by the delta(6)-protoilludene synthase PRO1 which catalyzes the cyclization of farnesyl diphosphate to protoilludene. The orsellinic acid synthase armB produces OA by condensing acetyl-CoA with 3 malonyl-CoA units in a three-round chain elongation reaction folowed by a C2-C7 ring closure. ArmB further catalyzes the trans-esterification of OA to the various sesquiterpene alcohols resulting from the hydroxylation of protoilludene. The melleolides cluster also includes 5 cytochrome P450 monooxygenases, 4 NAD(+)-dependent oxidoreductases, one flavin-dependent oxidoreductase, and one O-methyltransferase. The cytochrome P450 monooxygenases may be involved in protoilludene hydroxylation to elaborate melleolides with multiple alcohol groups, such as melleolide D, which carries alcohol functionalities at C-4, C-5, C-10, and C-13. The role of the NAD(+)-dependent enzymes remains unknown. Numerous melleolides, including arnamial, show 5'-O-methylation of the aromatic moiety which may be catalyzed by the methyltransferase encoded in the cluster. The flavin-dependent oxidoreductase might represent the dehydrogenase yielding the aldehyde in position 1 of arnamial and other melleolides. Finally, several halogenase localized outside of the cluster, are able to catalyze the transfer of a single chlorine atom to the melleolide backbone, resulting in a 6'-chloromelleolide product. This Armillaria gallica (Bulbous honey fungus) protein is Cytochrome P450 monooxygenase ARMGADRAFT_1018418.